We begin with the raw amino-acid sequence, 308 residues long: tRNA dimethylallyltransferase (308 aa).

ATP is bound at residue 14–21; it reads GPTASGKT. 16–21 contributes to the substrate binding site; sequence TASGKT. Interaction with substrate tRNA stretches follow at residues 39-42, 163-167, and 244-249; these read DSAL, QRLSR, and RCVGYR.

It belongs to the IPP transferase family. As to quaternary structure, monomer. Mg(2+) serves as cofactor.

It catalyses the reaction adenosine(37) in tRNA + dimethylallyl diphosphate = N(6)-dimethylallyladenosine(37) in tRNA + diphosphate. Catalyzes the transfer of a dimethylallyl group onto the adenine at position 37 in tRNAs that read codons beginning with uridine, leading to the formation of N6-(dimethylallyl)adenosine (i(6)A). This Shewanella baltica (strain OS185) protein is tRNA dimethylallyltransferase.